Reading from the N-terminus, the 503-residue chain is N-fatty-acyl-amino acid synthase/hydrolase PM20D1 (503 aa).

An N-terminal signal peptide occupies residues 1-24 (MAELLASLPAWAAVLLLFFATVSG). N-linked (GlcNAc...) asparagine glycosylation is present at Asn-72. A Zn(2+)-binding site is contributed by His-125. Residue Asp-127 is part of the active site. Zn(2+) is bound at residue Asp-157. The active-site Proton acceptor is Glu-191. The Zn(2+) site is built by Glu-192 and Asp-218. The N-linked (GlcNAc...) asparagine glycan is linked to Asn-443. His-465 is a binding site for Zn(2+).

The protein belongs to the peptidase M20A family. It depends on Zn(2+) as a cofactor. As to expression, in addition to being detected in blood (at protein level), PM20D1 is also highly expressed in other tissues including brown adipocytes, liver and kidney. It is also expressed in small intestine, large intestine, heart and pancreas.

The protein localises to the secreted. It catalyses the reaction an N-acyl-L-amino acid + H2O = an L-alpha-amino acid + a carboxylate. The enzyme catalyses an N-acyl-aromatic L-alpha-amino acid + H2O = an aromatic L-alpha-amino acid + a carboxylate. It carries out the reaction N-(5Z,8Z,11Z,14Z)-eicosatetraenoyl-glycine + H2O = (5Z,8Z,11Z,14Z)-eicosatetraenoate + glycine. The catalysed reaction is N-hexadecanoyl-L-phenylalanine + H2O = hexadecanoate + L-phenylalanine. It catalyses the reaction N-octadecanoyl-L-phenylalanine + H2O = octadecanoate + L-phenylalanine. The enzyme catalyses N-(4Z,7Z,10Z,13Z,16Z,19Z-docosahexaenoyl)-L-phenylalanine + H2O = (4Z,7Z,10Z,13Z,16Z,19Z)-docosahexaenoate + L-phenylalanine. It carries out the reaction N-(9Z-octadecenoyl)-L-asparagine + H2O = L-asparagine + (9Z)-octadecenoate. The catalysed reaction is (9Z)-octadecenoate + glycine = N-(9Z-octadecenoyl)glycine + H2O. It catalyses the reaction N-(9Z-octadecenoyl)-L-lysine + H2O = L-lysine + (9Z)-octadecenoate. The enzyme catalyses N-(9Z-octadecenoyl)-L-methionine + H2O = (9Z)-octadecenoate + L-methionine. It carries out the reaction N-(9Z-octadecenoyl)-L-serine + H2O = L-serine + (9Z)-octadecenoate. The catalysed reaction is N-(9Z-octadecenoyl)-L-tryptophan + H2O = L-tryptophan + (9Z)-octadecenoate. It catalyses the reaction N-(9Z-octadecenoyl)-L-tyrosine + H2O = L-tyrosine + (9Z)-octadecenoate. The enzyme catalyses N-(9Z-octadecenoyl)-L-glutamine + H2O = L-glutamine + (9Z)-octadecenoate. It carries out the reaction N-(5Z,8Z,11Z,14Z-eicosatetraenoyl)-L-serine + H2O = (5Z,8Z,11Z,14Z)-eicosatetraenoate + L-serine. The catalysed reaction is (5Z,8Z,11Z,14Z)-eicosatetraenoate + L-phenylalanine = N-(5Z,8Z,11Z,14Z-eicosatetraenoyl)-L-phenylalanine + H2O. It catalyses the reaction N-(9Z-octadecenoyl)-L-leucine + H2O = L-leucine + (9Z)-octadecenoate. The enzyme catalyses L-phenylalanine + (9Z)-octadecenoate = N-(9Z-octadecenoyl)-L-phenylalanine + H2O. The protein operates within amino-acid metabolism. It functions in the pathway energy metabolism; electron transfer. Its pathway is lipid metabolism; fatty acid metabolism. With respect to regulation, lipoproteins are powerful coactivators of PM20D1 activity in vitro and NAA biosynthesis in vivo. In terms of biological role, secreted enzyme that regulates the endogenous N-fatty acyl amino acid (NAAs) tissue and circulating levels by functioning as a bidirectional NAA synthase/hydrolase. It condenses free fatty acids and free amino acids to generate NAAs and bidirectionally catalyzes the reverse hydrolysis reaction. Some of these NAAs stimulate oxidative metabolism via mitochondrial uncoupling, increasing energy expenditure in a UPC1-independent manner. Thereby, this secreted protein may indirectly regulate whole body energy expenditure. PM20D1 circulates in tight association with both low- and high-density (LDL and HDL,respectively) lipoprotein particles. This chain is N-fatty-acyl-amino acid synthase/hydrolase PM20D1, found in Mus musculus (Mouse).